We begin with the raw amino-acid sequence, 515 residues long: Probable cytosol aminopeptidase (515 aa).

Positions 277 and 282 each coordinate Mn(2+). Lysine 289 is a catalytic residue. 3 residues coordinate Mn(2+): aspartate 300, aspartate 359, and glutamate 361. Residue arginine 363 is part of the active site.

The protein belongs to the peptidase M17 family. It depends on Mn(2+) as a cofactor.

The protein resides in the cytoplasm. It catalyses the reaction Release of an N-terminal amino acid, Xaa-|-Yaa-, in which Xaa is preferably Leu, but may be other amino acids including Pro although not Arg or Lys, and Yaa may be Pro. Amino acid amides and methyl esters are also readily hydrolyzed, but rates on arylamides are exceedingly low.. The enzyme catalyses Release of an N-terminal amino acid, preferentially leucine, but not glutamic or aspartic acids.. Functionally, presumably involved in the processing and regular turnover of intracellular proteins. Catalyzes the removal of unsubstituted N-terminal amino acids from various peptides. This is Probable cytosol aminopeptidase from Streptomyces griseus subsp. griseus (strain JCM 4626 / CBS 651.72 / NBRC 13350 / KCC S-0626 / ISP 5235).